Consider the following 89-residue polypeptide: Small ribosomal subunit protein uS15 (89 aa).

This sequence belongs to the universal ribosomal protein uS15 family. As to quaternary structure, part of the 30S ribosomal subunit. Forms a bridge to the 50S subunit in the 70S ribosome, contacting the 23S rRNA.

Functionally, one of the primary rRNA binding proteins, it binds directly to 16S rRNA where it helps nucleate assembly of the platform of the 30S subunit by binding and bridging several RNA helices of the 16S rRNA. In terms of biological role, forms an intersubunit bridge (bridge B4) with the 23S rRNA of the 50S subunit in the ribosome. The polypeptide is Small ribosomal subunit protein uS15 (Oleidesulfovibrio alaskensis (strain ATCC BAA-1058 / DSM 17464 / G20) (Desulfovibrio alaskensis)).